A 441-amino-acid polypeptide reads, in one-letter code: Histone-lysine N-methyltransferase set9 (441 aa).

In terms of domain architecture, SET spans 108-221 (CKFEICSTNQ…PGEEITTFYS (114 aa)).

Belongs to the class V-like SAM-binding methyltransferase superfamily. Histone-lysine methyltransferase family. Suvar4-20 subfamily.

Its subcellular location is the nucleus. The protein resides in the chromosome. It catalyses the reaction L-lysyl(20)-[histone H4] + 3 S-adenosyl-L-methionine = N(6),N(6),N(6)-trimethyl-L-lysyl(20)-[histone H4] + 3 S-adenosyl-L-homocysteine + 3 H(+). Histone methyltransferase that specifically trimethylates 'Lys-20' of histone H4 to form H4K20me3. H4 'Lys-20' methylation is apparently not involved in the regulation of gene expression or heterochromatin function but participates in DNA damage response by giving a 'histone mark' required for the recruitment of the checkpoint protein Crb2 to sites of DNA damage. This chain is Histone-lysine N-methyltransferase set9 (set9), found in Schizosaccharomyces pombe (strain 972 / ATCC 24843) (Fission yeast).